We begin with the raw amino-acid sequence, 676 residues long: A-type ATP synthase subunit I (676 aa).

A run of 8 helical transmembrane segments spans residues 341 to 361 (VFIA…IGYG), 390 to 410 (AGVM…PFIV), 449 to 469 (ILLF…FALG), 490 to 510 (IIGV…VGVF), 538 to 558 (LNVY…LFVM), 564 to 584 (MGAM…QIMS), 590 to 610 (AIGL…MKLI), and 617 to 637 (IPIV…ILGI).

It belongs to the V-ATPase 116 kDa subunit family. In terms of assembly, has multiple subunits with at least A(3), B(3), C, D, E, F, H, I and proteolipid K(x).

The protein resides in the cell membrane. Functionally, component of the A-type ATP synthase that produces ATP from ADP in the presence of a proton gradient across the membrane. This is A-type ATP synthase subunit I from Archaeoglobus fulgidus (strain ATCC 49558 / DSM 4304 / JCM 9628 / NBRC 100126 / VC-16).